The sequence spans 284 residues: Phospholipid phosphatase 1 (284 aa).

The Cytoplasmic segment spans residues 1–6; that stretch reads MFDKTR. Residues 5–7 carry the PDZ-binding; involved in localization to the apical cell membrane motif; it reads TRL. A helical membrane pass occupies residues 7-27; sequence LPYVALDVLCVLLAGLPFAIL. The Extracellular portion of the chain corresponds to 28–53; that stretch reads TSRHTPFQRGVFCNDESIKYPYKEDT. A helical membrane pass occupies residues 54-74; that stretch reads IPYALLGGIIIPFSIIVIILG. Residues 75 to 94 lie on the Cytoplasmic side of the membrane; the sequence is ETLSVYCNLLHSNSFIRNNY. Residues 95–115 traverse the membrane as a helical segment; the sequence is IATIYKAIGTFLFGAAASQSL. The Extracellular portion of the chain corresponds to 116-164; the sequence is TDIAKYSIGRLRPHFLDVCDPDWSKINCSDGYIEYYICRGNAERVKEGR. Residues 120–128 form a phosphatase sequence motif I region; the sequence is KYSIGRLRP. N-linked (GlcNAc...) asparagine glycosylation occurs at asparagine 142. A helical transmembrane segment spans residues 165–185; sequence LSFYSGHSSFSMYCMLFVALY. Positions 168–171 are phosphatase sequence motif II; sequence YSGH. The Proton donors role is filled by histidine 171. At 186 to 199 the chain is on the cytoplasmic side; it reads LQARMKGDWARLLR. The chain crosses the membrane as a helical span at residues 200-220; sequence PTLQFGLVAVSIYVGLSRVSD. Positions 216-227 are phosphatase sequence motif III; sequence SRVSDYKHHWSD. The Extracellular portion of the chain corresponds to 221 to 229; the sequence is YKHHWSDVL. Histidine 223 (nucleophile) is an active-site residue. A helical transmembrane segment spans residues 230–250; that stretch reads TGLIQGALVAILVAVYVSDFF. Residues 251–284 lie on the Cytoplasmic side of the membrane; that stretch reads KERTSFKERKEEDSHTTLHETPTTGNHYPSNHQP. The interval 260–284 is disordered; that stretch reads KEEDSHTTLHETPTTGNHYPSNHQP. A compositionally biased stretch (polar residues) spans 269–284; the sequence is HETPTTGNHYPSNHQP.

This sequence belongs to the PA-phosphatase related phosphoesterase family. In terms of assembly, forms functional homodimers and homooligomers that are not required for substrate recognition and catalytic activity. Can also form heterooligomers with PLPP2 and PLPP3. In terms of processing, N-glycosylated. N-linked sugars are of the complex type. N-glycosylation is not required for the phosphatase activity. Widely expressed with highest expression found in prostate. Found to be down-regulated in colon adenocarcinomas. As to expression, predominant in kidney, lung, placenta and liver. In terms of tissue distribution, predominant in heart and pancreas.

It localises to the cell membrane. Its subcellular location is the apical cell membrane. The protein localises to the membrane raft. The protein resides in the membrane. It is found in the caveola. It catalyses the reaction a 1,2-diacyl-sn-glycero-3-phosphate + H2O = a 1,2-diacyl-sn-glycerol + phosphate. The catalysed reaction is 1,2-dihexadecanoyl-sn-glycero-3-phosphate + H2O = 1,2-dihexadecanoyl-sn-glycerol + phosphate. The enzyme catalyses 1,2-di-(9Z-octadecenoyl)-sn-glycero-3-phosphate + H2O = 1,2-di-(9Z-octadecenoyl)-sn-glycerol + phosphate. It carries out the reaction a monoacyl-sn-glycero-3-phosphate + H2O = a monoacylglycerol + phosphate. It catalyses the reaction (9Z)-octadecenoyl-sn-glycero-3-phosphate + H2O = (9Z-octadecenoyl)-glycerol + phosphate. The catalysed reaction is a 1-acyl-sn-glycero-3-phosphate + H2O = a 1-acyl-sn-glycerol + phosphate. The enzyme catalyses 1-(9Z-octadecenoyl)-sn-glycero-3-phosphate + H2O = 1-(9Z-octadecenoyl)-sn-glycerol + phosphate. It carries out the reaction a 1,2-diacyl-sn-glycerol 3-diphosphate + H2O = a 1,2-diacyl-sn-glycero-3-phosphate + phosphate + H(+). It catalyses the reaction sphing-4-enine 1-phosphate + H2O = sphing-4-enine + phosphate. The catalysed reaction is an N-acylsphing-4-enine 1-phosphate + H2O = an N-acylsphing-4-enine + phosphate. The enzyme catalyses N-(octanoyl)-sphing-4-enine-1-phosphate + H2O = N-octanoylsphing-4-enine + phosphate. It carries out the reaction N-(9Z-octadecenoyl)-ethanolamine phosphate + H2O = N-(9Z-octadecenoyl) ethanolamine + phosphate. It catalyses the reaction 1-hexadecanoyl-2-(9Z-octadecenoyl)-sn-glycero-3-phosphate + H2O = 1-hexadecanoyl-2-(9Z-octadecenoyl)-sn-glycerol + phosphate. It participates in lipid metabolism; phospholipid metabolism. Its activity is regulated as follows. Magnesium-independent phospholipid phosphatase. Insensitive to N-ethylmaleimide. Inhibited by sphingosine, zinc ions and modestly by propanolol. Inhibited by vanadate. In terms of biological role, magnesium-independent phospholipid phosphatase of the plasma membrane that catalyzes the dephosphorylation of a variety of glycerolipid and sphingolipid phosphate esters including phosphatidate/PA, lysophosphatidate/LPA, diacylglycerol pyrophosphate/DGPP, sphingosine 1-phosphate/S1P and ceramide 1-phosphate/C1P. Also acts on N-oleoyl ethanolamine phosphate/N-(9Z-octadecenoyl)-ethanolamine phosphate, a potential physiological compound. Through its extracellular phosphatase activity allows both the hydrolysis and the cellular uptake of these bioactive lipid mediators from the milieu, regulating signal transduction in different cellular processes. It is for instance essential for the extracellular hydrolysis of S1P and subsequent conversion into intracellular S1P. Involved in the regulation of inflammation, platelets activation, cell proliferation and migration among other processes. May also have an intracellular activity to regulate phospholipid-mediated signaling pathways. In Homo sapiens (Human), this protein is Phospholipid phosphatase 1.